The following is a 274-amino-acid chain: Shikimate dehydrogenase (NADP(+)) (274 aa).

Residues 20-22 (SKS) and Thr-68 each bind shikimate. The active-site Proton acceptor is Lys-72. Asp-84 is a binding site for NADP(+). 2 residues coordinate shikimate: Asn-93 and Asp-109. Residues 131–135 (GAGGA) and Leu-217 contribute to the NADP(+) site. Residue Tyr-219 participates in shikimate binding. Gly-240 contributes to the NADP(+) binding site.

The protein belongs to the shikimate dehydrogenase family. Homodimer.

It carries out the reaction shikimate + NADP(+) = 3-dehydroshikimate + NADPH + H(+). Its pathway is metabolic intermediate biosynthesis; chorismate biosynthesis; chorismate from D-erythrose 4-phosphate and phosphoenolpyruvate: step 4/7. In terms of biological role, involved in the biosynthesis of the chorismate, which leads to the biosynthesis of aromatic amino acids. Catalyzes the reversible NADPH linked reduction of 3-dehydroshikimate (DHSA) to yield shikimate (SA). The chain is Shikimate dehydrogenase (NADP(+)) from Sphingopyxis alaskensis (strain DSM 13593 / LMG 18877 / RB2256) (Sphingomonas alaskensis).